Here is a 176-residue protein sequence, read N- to C-terminus: NAD(P)H-quinone oxidoreductase subunit I, chloroplastic (176 aa).

4Fe-4S ferredoxin-type domains lie at 55–84 (GRIH…VNWE) and 95–124 (QTYS…MTEE). [4Fe-4S] cluster-binding residues include C64, C67, C70, C74, C104, C107, C110, and C114.

Belongs to the complex I 23 kDa subunit family. As to quaternary structure, NDH is composed of at least 16 different subunits, 5 of which are encoded in the nucleus. [4Fe-4S] cluster is required as a cofactor.

It is found in the plastid. The protein localises to the chloroplast thylakoid membrane. The catalysed reaction is a plastoquinone + NADH + (n+1) H(+)(in) = a plastoquinol + NAD(+) + n H(+)(out). It catalyses the reaction a plastoquinone + NADPH + (n+1) H(+)(in) = a plastoquinol + NADP(+) + n H(+)(out). NDH shuttles electrons from NAD(P)H:plastoquinone, via FMN and iron-sulfur (Fe-S) centers, to quinones in the photosynthetic chain and possibly in a chloroplast respiratory chain. The immediate electron acceptor for the enzyme in this species is believed to be plastoquinone. Couples the redox reaction to proton translocation, and thus conserves the redox energy in a proton gradient. This is NAD(P)H-quinone oxidoreductase subunit I, chloroplastic from Mesostigma viride (Green alga).